Reading from the N-terminus, the 355-residue chain is DNA-directed RNA polymerase subunit alpha (355 aa).

Residues 1–248 (MYYNNDVSLC…EQLQPFISSD (248 aa)) are alpha N-terminal domain (alpha-NTD). The tract at residues 267-355 (YDPVLLRKVD…ELAKQHTDED (89 aa)) is alpha C-terminal domain (alpha-CTD).

It belongs to the RNA polymerase alpha chain family. As to quaternary structure, homodimer. The RNAP catalytic core consists of 2 alpha, 1 beta, 1 beta' and 1 omega subunit. When a sigma factor is associated with the core the holoenzyme is formed, which can initiate transcription.

It carries out the reaction RNA(n) + a ribonucleoside 5'-triphosphate = RNA(n+1) + diphosphate. In terms of biological role, DNA-dependent RNA polymerase catalyzes the transcription of DNA into RNA using the four ribonucleoside triphosphates as substrates. This chain is DNA-directed RNA polymerase subunit alpha, found in Wolbachia pipientis wMel.